The sequence spans 354 residues: Probable cinnamyl alcohol dehydrogenase 1 (354 aa).

8 residues coordinate Zn(2+): cysteine 47, histidine 69, glutamate 70, cysteine 100, cysteine 103, cysteine 106, cysteine 114, and cysteine 163. NADP(+)-binding positions include threonine 167, 188-193 (GLGGLG), 211-216 (STSESK), threonine 251, and 297-299 (SVT).

This sequence belongs to the zinc-containing alcohol dehydrogenase family. Homodimer. Requires Zn(2+) as cofactor.

It catalyses the reaction (E)-cinnamyl alcohol + NADP(+) = (E)-cinnamaldehyde + NADPH + H(+). The catalysed reaction is (E)-coniferol + NADP(+) = (E)-coniferaldehyde + NADPH + H(+). The enzyme catalyses (E)-sinapyl alcohol + NADP(+) = (E)-sinapaldehyde + NADPH + H(+). It carries out the reaction (E)-4-coumaroyl alcohol + NADP(+) = (E)-4-coumaraldehyde + NADPH + H(+). It catalyses the reaction (E)-caffeyl alcohol + NADP(+) = (E)-caffeyl aldehyde + NADPH + H(+). It participates in aromatic compound metabolism; phenylpropanoid biosynthesis. Functionally, involved in lignin biosynthesis. Catalyzes the final step specific for the production of lignin monomers. Catalyzes the NADPH-dependent reduction of coniferaldehyde, 5-hydroxyconiferaldehyde, sinapaldehyde, 4-coumaraldehyde and caffeyl aldehyde to their respective alcohols. The polypeptide is Probable cinnamyl alcohol dehydrogenase 1 (Oryza sativa subsp. japonica (Rice)).